The sequence spans 501 residues: Probable cytosol aminopeptidase (501 aa).

K268 and D273 together coordinate Mn(2+). K280 is a catalytic residue. Mn(2+) contacts are provided by D291, D350, and E352. Residue R354 is part of the active site.

It belongs to the peptidase M17 family. It depends on Mn(2+) as a cofactor.

The protein resides in the cytoplasm. It carries out the reaction Release of an N-terminal amino acid, Xaa-|-Yaa-, in which Xaa is preferably Leu, but may be other amino acids including Pro although not Arg or Lys, and Yaa may be Pro. Amino acid amides and methyl esters are also readily hydrolyzed, but rates on arylamides are exceedingly low.. The enzyme catalyses Release of an N-terminal amino acid, preferentially leucine, but not glutamic or aspartic acids.. Presumably involved in the processing and regular turnover of intracellular proteins. Catalyzes the removal of unsubstituted N-terminal amino acids from various peptides. The polypeptide is Probable cytosol aminopeptidase (Nitrosococcus oceani (strain ATCC 19707 / BCRC 17464 / JCM 30415 / NCIMB 11848 / C-107)).